We begin with the raw amino-acid sequence, 63 residues long: Protein DsrB (63 aa).

The protein belongs to the DsrB family.

This is Protein DsrB from Yersinia enterocolitica serotype O:8 / biotype 1B (strain NCTC 13174 / 8081).